Consider the following 604-residue polypeptide: Ras guanine nucleotide exchange factor H (604 aa).

Residues 1–26 are compositionally biased toward polar residues; the sequence is MSNTNINVQSSTPKKSLGSSQYSLAG. Positions 1–61 are disordered; it reads MSNTNINVQS…QENSIDDSGS (61 aa). The span at 27–49 shows a compositional bias: low complexity; that stretch reads SSSSNLNNINNNNNNNNNNNNNS. Polar residues predominate over residues 50–61; the sequence is TGQENSIDDSGS. A LisH domain is found at 115–147; the sequence is NDTMLLKLIMQYFHEENLTTSLKKIQEETKVQF. In terms of domain architecture, N-terminal Ras-GEF spans 221–335; the sequence is PDGTIKAATF…AVINLKIENY (115 aa). A Ras-GEF domain is found at 365 to 591; it reads DEEEIARQLC…EQPQLTLDLS (227 aa).

As to quaternary structure, component of the Sca1 complex composed of at least gefA, gefH, scaA, phr, and the protein phosphatase 2A subunits pppA and pho2B. Interacts directly with gefA and phr.

It is found in the cell membrane. In terms of biological role, promotes the exchange of Ras-bound GDP by GTP. Component of the Sca1 complex, a regulator of cell motility, chemotaxis and signal relay. The Sca1 complex is recruited to the plasma membrane in a chemoattractant- and F-actin-dependent manner and is enriched at the leading edge of chemotaxing cells where it regulates F-actin dynamics and signal relay by controlling the activation of rasC and the downstream target of rapamycin complex 2 (TORC2)-Akt/protein kinase B (PKB) pathway. The sequence is that of Ras guanine nucleotide exchange factor H (gefH) from Dictyostelium discoideum (Social amoeba).